Here is a 267-residue protein sequence, read N- to C-terminus: Membrane-spanning 4-domains subfamily A member 12 (267 aa).

The Cytoplasmic portion of the chain corresponds to 1-91 (MMSSKPTSHA…MNFKEEAKAL (91 aa)). A helical transmembrane segment spans residues 92–112 (GVIQIMVGLMHIGFGIVLCLI). The Extracellular segment spans residues 113–120 (SFSFREVL). Residues 121–141 (GFASTAVIGGYPFWGGLSFII) form a helical membrane-spanning segment. Residues 142-160 (SGSLSVSASKELSRCLVKG) lie on the Cytoplasmic side of the membrane. The chain crosses the membrane as a helical span at residues 161–181 (SLGMNIVSSILAFIGVILLLV). Over 182–200 (DMCINGVAGQDYWAVLSGK) the chain is Extracellular. A helical transmembrane segment spans residues 201–221 (GISATLMIFSLLEFFVACATA). The Cytoplasmic portion of the chain corresponds to 222–267 (HFANQANTTTNMSVLVIPNMYESNPVTPASSSAPPRCNNYSANAPK). The disordered stretch occupies residues 248 to 267 (TPASSSAPPRCNNYSANAPK).

It belongs to the MS4A family.

It localises to the membrane. Functionally, may be involved in signal transduction as a component of a multimeric receptor complex. In Homo sapiens (Human), this protein is Membrane-spanning 4-domains subfamily A member 12 (MS4A12).